Consider the following 386-residue polypeptide: Protein phosphatase methylesterase 1 (386 aa).

Positions 1-38 (MSALEKSMHLGRLPSRPPLPGSGGSQSGAKMRMGPGRK) are disordered. Ser15 carries the phosphoserine modification. Arg16 bears the Asymmetric dimethylarginine; alternate mark. Position 16 is an omega-N-methylarginine; alternate (Arg16). Phosphoserine is present on Ser42. Residues Ser156 and Asp181 contribute to the active site. The span at 254–265 (IIEEEEEDEEGS) shows a compositional bias: acidic residues. The disordered stretch occupies residues 254 to 280 (IIEEEEEDEEGSESISKRKKEDDMETK). The span at 268-280 (ISKRKKEDDMETK) shows a compositional bias: basic and acidic residues. His349 is an active-site residue.

This sequence belongs to the AB hydrolase superfamily. In terms of assembly, binds PPP2CA and PPP2CB. In terms of processing, phosphorylated by SIK1 following increases in intracellular sodium, leading to dissociation from the protein phosphatase 2A (PP2A) complex and subsequent dephosphorylation of sodium/potassium-transporting ATPase ATP1A1.

The catalysed reaction is [phosphatase 2A protein]-C-terminal L-leucine methyl ester + H2O = [phosphatase 2A protein]-C-terminal L-leucine + methanol + H(+). In terms of biological role, demethylates proteins that have been reversibly carboxymethylated. Demethylates PPP2CB (in vitro) and PPP2CA. Binding to PPP2CA displaces the manganese ion and inactivates the enzyme. This chain is Protein phosphatase methylesterase 1 (PPME1), found in Homo sapiens (Human).